A 78-amino-acid polypeptide reads, in one-letter code: Apolipoprotein C-I (78 aa).

The N-terminal stretch at 1 to 26 (MRLILWLPVLVVVLLMVLEGPAPAQG) is a signal peptide.

It belongs to the apolipoprotein C1 family.

The protein localises to the secreted. Inhibitor of lipoprotein binding to the low density lipoprotein (LDL) receptor, LDL receptor-related protein, and very low density lipoprotein (VLDL) receptor. Associates with high density lipoproteins (HDL) and the triacylglycerol-rich lipoproteins in the plasma and makes up about 10% of the protein of the VLDL and 2% of that of HDL. Appears to interfere directly with fatty acid uptake and is also the major plasma inhibitor of cholesteryl ester transfer protein (CETP). Binds free fatty acids and reduces their intracellular esterification. Modulates the interaction of APOE with beta-migrating VLDL and inhibits binding of beta-VLDL to the LDL receptor-related protein. This chain is Apolipoprotein C-I (APOC1), found in Lynx pardinus (Iberian lynx).